The following is a 152-amino-acid chain: ADP-ribose glycohydrolase OARD1 (152 aa).

N-acetylalanine is present on A2. Residues 2-152 (ASSLNEDPEG…TDIKITVYTL (151 aa)) form the Macro domain. At S4 the chain carries Phosphoserine. L21 is a binding site for substrate. The active-site Nucleophile is K84. Substrate is bound by residues 119–125 (RIGCGLD) and L152. D125 acts as the Proton acceptor in catalysis.

Ubiquitous.

Its subcellular location is the nucleus. The protein localises to the nucleoplasm. The protein resides in the nucleolus. It is found in the chromosome. It carries out the reaction 2''-O-acetyl-ADP-D-ribose + H2O = ADP-D-ribose + acetate + H(+). The catalysed reaction is 5-O-(ADP-D-ribosyl)-L-glutamyl-[protein] + H2O = L-glutamyl-[protein] + ADP-D-ribose + H(+). It catalyses the reaction alpha-NAD(+) + H2O = ADP-D-ribose + nicotinamide + H(+). Its activity is regulated as follows. Subject to competitive inhibition by the product ADP-ribose. Functionally, ADP-ribose glycohydrolase that hydrolyzes ADP-ribose and acts on different substrates, such as proteins ADP-ribosylated on glutamate and O-acetyl-ADP-D-ribose. Specifically acts as a glutamate mono-ADP-ribosylhydrolase by mediating the removal of mono-ADP-ribose attached to glutamate residues on proteins. Does not act on poly-ADP-ribosylated proteins: the poly-ADP-ribose chain of poly-ADP-ribosylated glutamate residues must by hydrolyzed into mono-ADP-ribosylated glutamate by PARG to become a substrate for OARD1. Deacetylates O-acetyl-ADP ribose, a signaling molecule generated by the deacetylation of acetylated lysine residues in histones and other proteins. Catalyzes the deacylation of O-acetyl-ADP-ribose, O-propionyl-ADP-ribose and O-butyryl-ADP-ribose, yielding ADP-ribose plus acetate, propionate and butyrate, respectively. This Homo sapiens (Human) protein is ADP-ribose glycohydrolase OARD1.